Here is a 62-residue protein sequence, read N- to C-terminus: Large ribosomal subunit protein uL30 (62 aa).

It belongs to the universal ribosomal protein uL30 family. Part of the 50S ribosomal subunit.

The polypeptide is Large ribosomal subunit protein uL30 (Thioalkalivibrio sulfidiphilus (strain HL-EbGR7)).